The following is a 1034-amino-acid chain: Receptor-type guanylate cyclase gcy-25 (1034 aa).

Positions 1–16 (MLLLLLLLKISTFVDS) are cleaved as a signal peptide. Topologically, residues 17-409 (FQIGHLEFEN…YDNNLCSDFH (393 aa)) are extracellular. N-linked (GlcNAc...) asparagine glycosylation is found at Asn28, Asn224, Asn301, Asn308, and Asn373. A helical transmembrane segment spans residues 410–430 (VFMIAAIVFSILLIPMAIAFY). Residues 431–1034 (LQRKEHLIQQ…DNSKKMFLNV (604 aa)) are Cytoplasmic-facing. Residues 464-749 (RVSTISTARA…KITDAVNREF (286 aa)) form the Protein kinase domain. ATP-binding positions include 470–478 (TARASYSSI) and Lys497. The stretch at 758-785 (IDQMIEMIDEYSANLEQIVAERTRELEQ) forms a coiled coil. The 131-residue stretch at 821 to 951 (TLLVVDVCQF…DTVNMACRMA (131 aa)) folds into the Guanylate cyclase domain.

The protein belongs to the adenylyl cyclase class-4/guanylyl cyclase family. In terms of tissue distribution, expressed in AQR, PQR and URX sensory neurons.

The protein localises to the cell membrane. The catalysed reaction is GTP = 3',5'-cyclic GMP + diphosphate. In terms of biological role, guanylate cyclase involved in the production of the second messenger cGMP. In Caenorhabditis elegans, this protein is Receptor-type guanylate cyclase gcy-25.